The following is a 96-amino-acid chain: Large ribosomal subunit protein bL28 (96 aa).

Polar residues predominate over residues 1 to 22 (MSRSCELTGKGVQSGNNVSHAN). The tract at residues 1 to 24 (MSRSCELTGKGVQSGNNVSHANNK) is disordered.

This sequence belongs to the bacterial ribosomal protein bL28 family.

This is Large ribosomal subunit protein bL28 from Rhizobium meliloti (strain 1021) (Ensifer meliloti).